Reading from the N-terminus, the 2193-residue chain is MGSQVSTQRSGSHENSNSASEGSTINYTTINYYKDAYAASAGRQDMSQDPKKFTDPVMDVIHEMAPPLKSPSAEACGYSDRVAQLTIGNSTITTQEAANIIIAYGEWPEYCKDADATAVDKPTRPDVSVNRFFTLDTKSWAKDSKGWYWKFPDVLTEVGVFGQNAQFHYLYRSGFCVHVQCNASKFHQGALLVAILPEYVLGTIAGGDGNENSHPPYVTTQPGQVGAVLTNPYVLDAGVPLSQLTVCPHQWINLRTNNCATIIVPYMNTVPFDSALNHCNFGLIVVPVVPLDFNAGATSEIPITVTIAPMCAEFAGLRQAIKQGIPTELKPGTNQFLTTDDGVSAPILPGFHPTPAIHIPGEVRNLLEICRVETILEVNNLQSNETTPMQRLCFPVSVQSKTGELCAVFRADPGRNGPWQSTILGQLCRYYTQWSGSLEVTFMFAGSFMATGKMLIAYTPPGGGVPADRLTAMLGTHVIWDFGLQSSVTLVIPWISNTHYRAHAKDGYFDYYTTGTITIWYQTNYVVPIGAPTTAYIVALAAAQDNFTMKLCKDTEDIEQSANIQGDGIADMIDQAVTSRVGRALTSLQVEPTAANTNASEHRLGTGLVPALQAAETGASSNAQDENLIETRCVLNHHSTQETTIGNFFSRAGLVSIITMPTTGTQNTDGYVNWDIDLMGYAQMRRKCELFTYMRFDAEFTFVAAKPNGELVPQLLQYMYVPPGAPKPTSRDSFAWQTATNPSIFVKLTDPPAQVSVPFMSPASAYQWFYDGYPTFGAHPQSNDADYGQCPNNMMGTFSIRTVGTEKSPHSITLRVYMRIKHVRAWIPRPLRNQPYLFKTNPNYKGNDIKCTSTSRDKITTLGKFGQQSGAIYVGNYRVVNRHLATHNDWANLVWEDSSRDLLVSSTTAQGCDTIARCDCQTGVYYCSSRRKHYPVSFSKPSLIFVEASEYYPARYQSHLMLAVGHSEPGDCGGILRCQHGVVGIVSTGGNGLVGFADVRDLLWLDEEAMEQGVSDYIKGLGDAFGTGFTDAVSREVEALKNHLIGSEGAVEKILKNLIKLISALVIVIRSDYDMVTLTATLALIGCHGSPWAWIKAKTASILGIPIAQKQSASWLKKFNDMANAAKGLEWISNKISKFIDWLKEKIIPAAKEKVEFLNNLKQLPLLENQISNLEQSAASQEDLEAMFGNVSYLAHFCRKFQPLYATEAKRVYALEKRMNNYMQFKSKHRIEPVCLIIRGSPGTGKSLATGIIARAIADKYHSSVYSLPPDPDHFDGYKQQVVTVMDDLCQNPDGKDMSLFCQMVSTVDFIPPMASLEEKGVSFTSKFVIASTNASNIIVPTVSDSDAIRRRFYMDCDIEVTDSYKTDLGRLDAGRAARLCSENNTANFKRCSPLVCGKAIQLRDRKSKVRYSVDTVVSELIREYNNRYAIGNTIEALFQGPPKFRPIRISLEEKPAPDAISDLLASVDSEEVRQYCRDQGWIIPETPTNVERHLNRAVLIMQSIATVVAVVSLVYVIYKLFAGFQGAYSGAPKQTLKKPILRTATVQGPSLDFALSLLRRNIRQVQTDQGHFTMLGVRDRLAVLPRHSQPGKTIWVEHKLINILDAVELVDEQGVNLELTLVTLDTNEKFRDITKFIPENISAASDATLVINTEHMPSMFVPVGDVVQYGFLNLSGKPTHRTMMYNFPTKAGQCGGVVTSVGKVIGIHIGGNGRQGFCAGLKRSYFASEQGEIQWVKPNKETGRLNINGPTRTKLEPSVFHDVFEGNKEPAVLHSRDPRLEVDFEQALFSKYVGNTLHEPDEYIKEAALHYANQLKQLDINTSQMSMEEACYGTENLEAIDLHTSAGYPYSALGIKKRDILDPTTRDVSKMKFYMDKYGLDLPYSTYVKDELRSIDKIKKGKSRLIEASSLNDSVYLRMAFGHLYETFHANPGTITGSAVGCNPDTFWSKLPILLPGSLFAFDYSGYDASLSPVWFRALELVLREVGYSEEAVSLIEGINHTHHVYRNKTYCVLGGMPSGCSGTSIFNSMINNIIIRTLLIKTFKGIDLDELNMVAYGDDVLASYPFPIDCLELARTGKEYGLTMTPADKSPCFNEVNWGNATFLKRGFLPDEQFPFLIHPTMPMKEIHESIRWTKDARNTQDHVRSLCLLAWHNGKQEYEKFVSTIRSVPVGKALAIPNYENLRRNWLELF.

Residues 1–22 are disordered; that stretch reads MGSQVSTQRSGSHENSNSASEG. Gly2 is lipidated: N-myristoyl glycine; by host. Topologically, residues 2–1503 are cytoplasmic; sequence GSQVSTQRSG…HLNRAVLIMQ (1502 aa). Amphipathic alpha-helix stretches follow at residues 566-588 and 568-588; these read GDGIADMIDQAVTSRVGRALTSL and GIADMIDQAVTSRVGRALTSL. Catalysis depends on for protease 2A activity residues His883 and Asp901. Residues Cys918 and Cys920 each contribute to the Zn(2+) site. The active-site For protease 2A activity is the Cys972. Zn(2+) is bound by residues Cys978 and His980. The interval 1112–1184 is membrane-binding; it reads SASWLKKFND…EQSAASQEDL (73 aa). The interval 1112–1250 is oligomerization; it reads SASWLKKFND…SPGTGKSLAT (139 aa). Residues 1133–1137 are RNA-binding; sequence SNKIS. The SF3 helicase domain occupies 1216-1374; it reads EKRMNNYMQF…YKTDLGRLDA (159 aa). 1240–1247 provides a ligand contact to ATP; it reads GSPGTGKS. Zn(2+)-binding residues include Cys1381, Cys1392, and Cys1397. The C4-type; degenerate zinc-finger motif lies at 1381–1397; the sequence is CSENNTANFKRCSPLVC. The interval 1424 to 1431 is RNA-binding; that stretch reads EYNNRYAI. An oligomerization region spans residues 1435–1440; sequence IEALFQ. An intramembrane segment occupies 1504 to 1519; that stretch reads SIATVVAVVSLVYVIY. Topologically, residues 1520 to 2193 are cytoplasmic; the sequence is KLFAGFQGAY…NLRRNWLELF (674 aa). Tyr1529 bears the O-(5'-phospho-RNA)-tyrosine mark. The region spanning 1549 to 1727 is the Peptidase C3 domain; sequence GPSLDFALSL…FCAGLKRSYF (179 aa). Catalysis depends on for protease 3C activity residues His1588, Glu1619, and Cys1695. A RdRp catalytic domain is found at 1958–2073; sequence GSLFAFDYSG…ASYPFPIDCL (116 aa). Mg(2+) contacts are provided by Asp1964 and Asp2060.

It belongs to the picornaviruses polyprotein family. In terms of assembly, interacts with capsid protein VP1 and capsid protein VP3 to form heterotrimeric protomers. Interacts with capsid protein VP0, and capsid protein VP3 to form heterotrimeric protomers. Five protomers subsequently associate to form pentamers which serve as building blocks for the capsid. Interacts with capsid protein VP2, capsid protein VP3 and capsid protein VP4 following cleavage of capsid protein VP0. As to quaternary structure, interacts with capsid protein VP1 and capsid protein VP3 in the mature capsid. In terms of assembly, interacts with capsid protein VP0 and capsid protein VP1 to form heterotrimeric protomers. Five protomers subsequently associate to form pentamers which serve as building blocks for the capsid. Interacts with capsid protein VP4 in the mature capsid. Interacts with protein 2C; this interaction may be important for virion morphogenesis. Interacts with capsid protein VP1 and capsid protein VP3. As to quaternary structure, homodimer. In terms of assembly, homohexamer; forms a hexameric ring structure with 6-fold symmetry characteristic of AAA+ ATPases. Interacts (via N-terminus) with host RTN3 (via reticulon domain); this interaction is important for viral replication. Interacts with capsid protein VP3; this interaction may be important for virion morphogenesis. Interacts with protein 3CD. As to quaternary structure, homodimer. Interacts with host GBF1. Interacts (via GOLD domain) with host ACBD3 (via GOLD domain); this interaction allows the formation of a viral protein 3A/ACBD3 heterotetramer with a 2:2 stoichiometry, which will stimulate the recruitment of host PI4KB in order to synthesize PI4P at the viral RNA replication sites. In terms of assembly, interacts with RNA-directed RNA polymerase. Interacts with host IFIH1/MDA5; this interaction inhibits host IFIH1. As to quaternary structure, interacts with protein 3AB and with RNA-directed RNA polymerase. In terms of assembly, interacts with Viral protein genome-linked and with protein 3CD. The cofactor is Mg(2+). In terms of processing, specific enzymatic cleavages in vivo by the viral proteases yield processing intermediates and the mature proteins. Post-translationally, myristoylation is required for the formation of pentamers during virus assembly. Further assembly of 12 pentamers and a molecule of genomic RNA generates the provirion. During virion maturation, immature virions are rendered infectious following cleavage of VP0 into VP4 and VP2. This maturation seems to be an autocatalytic event triggered by the presence of RNA in the capsid and it is followed by a conformational change infectious virion. In terms of processing, myristoylation is required during RNA encapsidation and formation of the mature virus particle. Post-translationally, VPg is uridylylated by the polymerase into VPg-pUpU. This acts as a nucleotide-peptide primer for the genomic RNA replication.

Its subcellular location is the virion. The protein resides in the host cytoplasm. It localises to the host cytoplasmic vesicle membrane. It is found in the host nucleus. It carries out the reaction a ribonucleoside 5'-triphosphate + H2O = a ribonucleoside 5'-diphosphate + phosphate + H(+). The enzyme catalyses Selective cleavage of Tyr-|-Gly bond in the picornavirus polyprotein.. The catalysed reaction is RNA(n) + a ribonucleoside 5'-triphosphate = RNA(n+1) + diphosphate. It catalyses the reaction Selective cleavage of Gln-|-Gly bond in the poliovirus polyprotein. In other picornavirus reactions Glu may be substituted for Gln, and Ser or Thr for Gly.. Its activity is regulated as follows. Replication or transcription is subject to high level of random mutations by the nucleotide analog ribavirin. Forms an icosahedral capsid of pseudo T=3 symmetry with capsid proteins VP2 and VP3. The capsid is 300 Angstroms in diameter, composed of 60 copies of each capsid protein and enclosing the viral positive strand RNA genome. Capsid protein VP1 mainly forms the vertices of the capsid. Capsid protein VP1 interacts with host cell receptor to provide virion attachment to target host cells. This attachment induces virion internalization. After binding to its receptor, the capsid undergoes conformational changes. Capsid protein VP1 N-terminus (that contains an amphipathic alpha-helix) and capsid protein VP4 are externalized. Together, they shape a pore in the host membrane through which viral genome is translocated to host cell cytoplasm. In terms of biological role, forms an icosahedral capsid of pseudo T=3 symmetry with capsid proteins VP2 and VP3. The capsid is 300 Angstroms in diameter, composed of 60 copies of each capsid protein and enclosing the viral positive strand RNA genome. Its function is as follows. Lies on the inner surface of the capsid shell. After binding to the host receptor, the capsid undergoes conformational changes. Capsid protein VP4 is released, Capsid protein VP1 N-terminus is externalized, and together, they shape a pore in the host membrane through which the viral genome is translocated into the host cell cytoplasm. Functionally, component of immature procapsids, which is cleaved into capsid proteins VP4 and VP2 after maturation. Allows the capsid to remain inactive before the maturation step. Cysteine protease that cleaves viral polyprotein and specific host proteins. It is responsible for the autocatalytic cleavage between the P1 and P2 regions, which is the first cleavage occurring in the polyprotein. Also cleaves the host translation initiation factor EIF4G1, in order to shut down the capped cellular mRNA translation. Inhibits the host nucleus-cytoplasm protein and RNA trafficking by cleaving host members of the nuclear pores. Counteracts stress granule formation probably by antagonizing its assembly or promoting its dissassembly. Cleaves and inhibits host IFIH1/MDA5, thereby inhibiting the type-I IFN production and the establishment of the antiviral state. Cleaves and inhibits host MAVS, thereby inhibiting the type-I IFN production and the establishment of the antiviral state. In terms of biological role, plays an essential role in the virus replication cycle by acting as a viroporin. Creates a pore in the host endoplasmic reticulum and as a consequence releases Ca2+ in the cytoplasm of infected cell. In turn, high levels of cytoplasmic calcium may trigger membrane trafficking and transport of viral ER-associated proteins to viroplasms, sites of viral genome replication. Its function is as follows. Induces and associates with structural rearrangements of intracellular membranes. Displays RNA-binding, nucleotide binding and NTPase activities. May play a role in virion morphogenesis and viral RNA encapsidation by interacting with the capsid protein VP3. Functionally, localizes the viral replication complex to the surface of membranous vesicles. Together with protein 3CD binds the Cis-Active RNA Element (CRE) which is involved in RNA synthesis initiation. Acts as a cofactor to stimulate the activity of 3D polymerase, maybe through a nucleid acid chaperone activity. Localizes the viral replication complex to the surface of membranous vesicles. It inhibits host cell endoplasmic reticulum-to-Golgi apparatus transport and causes the disassembly of the Golgi complex, possibly through GBF1 interaction. This would result in depletion of MHC, trail receptors and IFN receptors at the host cell surface. Plays an essential role in viral RNA replication by recruiting ACBD3 and PI4KB at the viral replication sites, thereby allowing the formation of the rearranged membranous structures where viral replication takes place. In terms of biological role, acts as a primer for viral RNA replication and remains covalently bound to viral genomic RNA. VPg is uridylylated prior to priming replication into VPg-pUpU. The oriI viral genomic sequence may act as a template for this. The VPg-pUpU is then used as primer on the genomic RNA poly(A) by the RNA-dependent RNA polymerase to replicate the viral genome. During genome replication, the VPg-RNA linkage is removed by the host TDP2, thereby accelerating replication. During the late stage of the replication cycle, host TDP2 is excluded from sites of viral RNA synthesis and encapsidation, allowing for the generation of progeny virions. Its function is as follows. Involved in the viral replication complex and viral polypeptide maturation. It exhibits protease activity with a specificity and catalytic efficiency that is different from protease 3C. Protein 3CD lacks polymerase activity. Protein 3CD binds to the 5'UTR of the viral genome. Functionally, major viral protease that mediates proteolytic processing of the polyprotein. Cleaves host EIF5B, contributing to host translation shutoff. Also cleaves host PABPC1, contributing to host translation shutoff. Binds and inhibits host IFIH1/MDA5, thereby inhibiting the type-I IFN production and the establishment of the antiviral state. Cleaves host MAP3K7/TAK1, resulting in inhibition of TRAF6-triggered NF-kappa-B induction. Cleaves host NLRP1, triggers host N-glycine-mediated degradation of the autoinhibitory NLRP1 N-terminal fragment. Replicates the viral genomic RNA on the surface of intracellular membranes. May form linear arrays of subunits that propagate along a strong head-to-tail interaction called interface-I. Covalently attaches UMP to a tyrosine of VPg, which is used to prime RNA synthesis. The positive stranded RNA genome is first replicated at virus induced membranous vesicles, creating a dsRNA genomic replication form. This dsRNA is then used as template to synthesize positive stranded RNA genomes. ss(+)RNA genomes are either translated, replicated or encapsidated. The chain is Genome polyprotein from Homo sapiens (Human).